Reading from the N-terminus, the 363-residue chain is NAD(P)H-quinone oxidoreductase subunit 1, chloroplastic (363 aa).

6 helical membrane-spanning segments follow: residues 30-50, 104-124, 127-147, 253-273, 300-320, and 343-363; these read LVPILTLVLAITIGVLVIVWL, IAVISIILSYSVIPFSYHLVL, LGIGVFLWIAVSSIAPIGLLM, FGLFYVASYLNLLVSSLFVTV, VFGTTMGMFITLAKTYLFLFI, and FLLPISLGNLLLTTSFQLLSL.

Belongs to the complex I subunit 1 family. As to quaternary structure, NDH is composed of at least 16 different subunits, 5 of which are encoded in the nucleus.

The protein localises to the plastid. It is found in the chloroplast thylakoid membrane. The enzyme catalyses a plastoquinone + NADH + (n+1) H(+)(in) = a plastoquinol + NAD(+) + n H(+)(out). It catalyses the reaction a plastoquinone + NADPH + (n+1) H(+)(in) = a plastoquinol + NADP(+) + n H(+)(out). NDH shuttles electrons from NAD(P)H:plastoquinone, via FMN and iron-sulfur (Fe-S) centers, to quinones in the photosynthetic chain and possibly in a chloroplast respiratory chain. The immediate electron acceptor for the enzyme in this species is believed to be plastoquinone. Couples the redox reaction to proton translocation, and thus conserves the redox energy in a proton gradient. The protein is NAD(P)H-quinone oxidoreductase subunit 1, chloroplastic of Piper cenocladum (Ant piper).